We begin with the raw amino-acid sequence, 368 residues long: Probable dual-specificity RNA methyltransferase RlmN (368 aa).

The active-site Proton acceptor is the glutamate 100. In terms of domain architecture, Radical SAM core spans 106-344 (QYYGLSVCVT…CVVRQEHGTD (239 aa)). Cysteine 113 and cysteine 349 are disulfide-bonded. [4Fe-4S] cluster is bound by residues cysteine 120, cysteine 124, and cysteine 127. S-adenosyl-L-methionine-binding positions include 172–173 (GE), serine 204, 227–229 (SLH), and asparagine 305. Cysteine 349 (S-methylcysteine intermediate) is an active-site residue.

Belongs to the radical SAM superfamily. RlmN family. The cofactor is [4Fe-4S] cluster.

Its subcellular location is the cytoplasm. The catalysed reaction is adenosine(2503) in 23S rRNA + 2 reduced [2Fe-2S]-[ferredoxin] + 2 S-adenosyl-L-methionine = 2-methyladenosine(2503) in 23S rRNA + 5'-deoxyadenosine + L-methionine + 2 oxidized [2Fe-2S]-[ferredoxin] + S-adenosyl-L-homocysteine. It catalyses the reaction adenosine(37) in tRNA + 2 reduced [2Fe-2S]-[ferredoxin] + 2 S-adenosyl-L-methionine = 2-methyladenosine(37) in tRNA + 5'-deoxyadenosine + L-methionine + 2 oxidized [2Fe-2S]-[ferredoxin] + S-adenosyl-L-homocysteine. Its function is as follows. Specifically methylates position 2 of adenine 2503 in 23S rRNA and position 2 of adenine 37 in tRNAs. This is Probable dual-specificity RNA methyltransferase RlmN from Streptococcus agalactiae serotype III (strain NEM316).